The chain runs to 691 residues: Elongation factor G (691 aa).

The 276-residue stretch at 8 to 283 (EDYRNFGIMA…AVVDYLPSPI (276 aa)) folds into the tr-type G domain. GTP is bound by residues 17–24 (AHIDAGKT), 81–85 (DTPGH), and 135–138 (NKMD).

It belongs to the TRAFAC class translation factor GTPase superfamily. Classic translation factor GTPase family. EF-G/EF-2 subfamily.

The protein localises to the cytoplasm. Catalyzes the GTP-dependent ribosomal translocation step during translation elongation. During this step, the ribosome changes from the pre-translocational (PRE) to the post-translocational (POST) state as the newly formed A-site-bound peptidyl-tRNA and P-site-bound deacylated tRNA move to the P and E sites, respectively. Catalyzes the coordinated movement of the two tRNA molecules, the mRNA and conformational changes in the ribosome. This chain is Elongation factor G, found in Methylocella silvestris (strain DSM 15510 / CIP 108128 / LMG 27833 / NCIMB 13906 / BL2).